Here is a 253-residue protein sequence, read N- to C-terminus: Low affinity immunoglobulin gamma Fc region receptor III-A (253 aa).

A signal peptide spans Met-1 to Ala-20. At Ala-21 to Gln-207 the chain is on the extracellular side. Ig-like C2-type domains are found at residues Pro-24 to Gln-90 and Pro-99 to Thr-189. 2 cysteine pairs are disulfide-bonded: Cys-47/Cys-89 and Cys-128/Cys-172. N-linked (GlcNAc...) asparagine glycosylation is found at Asn-56, Asn-63, Asn-165, and Asn-180. A helical transmembrane segment spans residues Ile-208–Phe-226. Over Ser-227 to Lys-253 the chain is Cytoplasmic.

In terms of assembly, forms a heterooligomeric complex with ITAM-containing signaling subunits FCER1G. Interacts (via transmembrane domain) with signaling subunits; this interaction is a prerequisite for receptor complex expression on the cell surface and intracellular signal transduction. Binds the Fc region of antigen-complexed IgG.

The protein resides in the cell membrane. Receptor for the invariable Fc fragment of immunoglobulin gamma (IgG). Optimally activated upon binding of clustered antigen-IgG complexes displayed on cell surfaces, triggers lysis of antibody-coated cells, a process known as antibody-dependent cellular cytotoxicity (ADCC). Does not bind free monomeric IgG, thus avoiding inappropriate effector cell activation in the absence of antigenic trigger. Mediates IgG effector functions on natural killer (NK) cells. Binds antigen-IgG complexes generated upon infection and triggers NK cell-dependent cytokine production and degranulation to limit viral load and propagation. Fc-binding subunit that associates with FCER1G adapter to form functional signaling complexes. Following the engagement of antigen-IgG complexes, triggers phosphorylation of immunoreceptor tyrosine-based activation motif (ITAM)-containing adapters with subsequent activation of phosphatidylinositol 3-kinase signaling and sustained elevation of intracellular calcium that ultimately drive NK cell activation. Mediates enhanced ADCC in response to afucosylated IgGs. The chain is Low affinity immunoglobulin gamma Fc region receptor III-A from Oryctolagus cuniculus (Rabbit).